A 331-amino-acid polypeptide reads, in one-letter code: GTP 3',8-cyclase (331 aa).

A Radical SAM core domain is found at 6–231; sequence PFGRTISYLR…TDIPFKTGGP (226 aa). Arginine 15 is a GTP binding site. 2 residues coordinate [4Fe-4S] cluster: cysteine 22 and cysteine 26. Position 28 (tyrosine 28) interacts with S-adenosyl-L-methionine. Cysteine 29 contacts [4Fe-4S] cluster. Arginine 64 is a GTP binding site. Residue glycine 68 participates in S-adenosyl-L-methionine binding. Residue threonine 98 participates in GTP binding. An S-adenosyl-L-methionine-binding site is contributed by serine 122. Lysine 158 is a binding site for GTP. Residue methionine 192 participates in S-adenosyl-L-methionine binding. Residues cysteine 255 and cysteine 258 each contribute to the [4Fe-4S] cluster site. 260 to 262 lines the GTP pocket; that stretch reads RVR. Cysteine 272 contributes to the [4Fe-4S] cluster binding site.

It belongs to the radical SAM superfamily. MoaA family. In terms of assembly, monomer and homodimer. [4Fe-4S] cluster is required as a cofactor.

The enzyme catalyses GTP + AH2 + S-adenosyl-L-methionine = (8S)-3',8-cyclo-7,8-dihydroguanosine 5'-triphosphate + 5'-deoxyadenosine + L-methionine + A + H(+). It participates in cofactor biosynthesis; molybdopterin biosynthesis. Its function is as follows. Catalyzes the cyclization of GTP to (8S)-3',8-cyclo-7,8-dihydroguanosine 5'-triphosphate. This Mesorhizobium japonicum (strain LMG 29417 / CECT 9101 / MAFF 303099) (Mesorhizobium loti (strain MAFF 303099)) protein is GTP 3',8-cyclase.